The primary structure comprises 747 residues: Protein FAM83C (747 aa).

The interval 1-309 (MFGGPGPGVL…LYAESQPVEG (309 aa)) is DUF1669. 7 disordered regions span residues 322–352 (LRPP…SSIK), 374–412 (TGVV…LYRA), 462–484 (LSRF…GRWV), 517–550 (AREV…SPSQ), 588–633 (NQSR…LGHS), 646–672 (GEGP…DEKR), and 692–715 (ARQG…DLVR). Over residues 328-350 (ALAFRPDVPSPTSSLPSSTSLSS) the composition is skewed to low complexity. Positions 390-402 (GQPSLHRQLSDPN) are enriched in polar residues. Gly residues predominate over residues 697 to 707 (EPGGPKGGHLN).

This sequence belongs to the FAM83 family. As to quaternary structure, may interact with RAF1. Phosphorylated in vitro by CSNK1A1.

Its subcellular location is the cytoplasm. In terms of biological role, may play a role in MAPK signaling. The polypeptide is Protein FAM83C (Homo sapiens (Human)).